Consider the following 890-residue polypeptide: tRNase Z TRZ3, mitochondrial (890 aa).

The transit peptide at 1–44 (MINSMPYLHKNLRLLRLLSSKSSPFPLSLRPFSPRSFSLSTLFS) directs the protein to the mitochondrion. Residues 46 to 67 (SSSSSSMENNEATNGSKSSSNS) are disordered.

Belongs to the RNase Z family. Homodimer. The cofactor is Zn(2+). It depends on Ca(2+) as a cofactor. Mn(2+) serves as cofactor. Requires Mg(2+) as cofactor.

It localises to the mitochondrion. The protein resides in the nucleus. It carries out the reaction Endonucleolytic cleavage of RNA, removing extra 3' nucleotides from tRNA precursor, generating 3' termini of tRNAs. A 3'-hydroxy group is left at the tRNA terminus and a 5'-phosphoryl group is left at the trailer molecule.. Zinc phosphodiesterase, which displays tRNA 3'-processing endonuclease activity. Involved in tRNA maturation, by removing a 3'-trailer from precursor tRNA. Can process the mitochondrial tRNA-like structures (t-elements). Involved in the processing of small nucleolar RNAs (snoRNAs). The polypeptide is tRNase Z TRZ3, mitochondrial (Arabidopsis thaliana (Mouse-ear cress)).